The chain runs to 71 residues: Conotoxin Bu23 (71 aa).

Positions 1–21 (MGMRMMVTVFLLGVLATTVVS) are cleaved as a signal peptide. Positions 22–37 (LRSNRASDGRRGIVNK) are excised as a propeptide. Asn70 carries the asparagine amide modification.

This sequence belongs to the conotoxin A superfamily. Post-translationally, contains 3 disulfide bonds. They are not indicated here, since framework IV presents two different connectivities (I-V, II-III, IV-VI and I-III, II-V, IV-VI). As to expression, expressed by the venom duct.

The protein resides in the secreted. The protein is Conotoxin Bu23 of Conus bullatus (Bubble cone).